Here is a 968-residue protein sequence, read N- to C-terminus: RNA polymerase-associated protein RapA (968 aa).

A Helicase ATP-binding domain is found at Asp-164–Ser-334. Residue Asp-177–Thr-184 coordinates ATP. Residues Asp-280 to His-283 carry the DEAH box motif. One can recognise a Helicase C-terminal domain in the interval Arg-490–Asp-644.

The protein belongs to the SNF2/RAD54 helicase family. RapA subfamily. As to quaternary structure, interacts with the RNAP. Has a higher affinity for the core RNAP than for the holoenzyme. Its ATPase activity is stimulated by binding to RNAP.

Transcription regulator that activates transcription by stimulating RNA polymerase (RNAP) recycling in case of stress conditions such as supercoiled DNA or high salt concentrations. Probably acts by releasing the RNAP, when it is trapped or immobilized on tightly supercoiled DNA. Does not activate transcription on linear DNA. Probably not involved in DNA repair. The sequence is that of RNA polymerase-associated protein RapA from Citrobacter koseri (strain ATCC BAA-895 / CDC 4225-83 / SGSC4696).